The sequence spans 245 residues: Cysteine-rich secretory protein 3 (245 aa).

The signal sequence occupies residues 1 to 20 (MTLFPVLLFLVAGLLPSFPA). The SCP domain occupies 43–171 (VNKHNELRRA…VLKYYYVCQY (129 aa)). Cystine bridges form between Cys191-Cys198, Cys194-Cys203, Cys207-Cys240, Cys216-Cys234, and Cys225-Cys238. Residues 207-240 (CKYEDLYSNCKSLKLTLTCKHQLVRDSCKASCNC) enclose the ShKT domain. N-linked (GlcNAc...) asparagine glycosylation is present at Asn239.

Belongs to the CRISP family. Interacts with A1BG. Salivary gland, pancreas and prostate &gt; epididymis, ovary, thymus and colon.

The protein resides in the secreted. The sequence is that of Cysteine-rich secretory protein 3 (CRISP3) from Homo sapiens (Human).